Consider the following 59-residue polypeptide: Cortexin domain-containing 1 protein (59 aa).

A helical transmembrane segment spans residues 17–37 (LTLACFVFLCLFLVVMIIRCA).

It localises to the membrane. This chain is Cortexin domain-containing 1 protein, found in Homo sapiens (Human).